A 212-amino-acid chain; its full sequence is HTH-type transcriptional regulatory protein RaaS (212 aa).

In terms of domain architecture, HTH tetR-type spans Leu6–Ile65. A DNA-binding region (H-T-H motif) is located at residues Gly28–Phe47.

Homodimer. Interacts with long chain acyl-CoA derivatives. Interacts with several drugs such rhodamine 6G, ethidium and safranin O.

Interaction with long chain acyl-CoA derivatives (oleoyl-CoA and, to lesser extent, stearoyl-CoA) prevents binding to DNA, leading to the expression of the target genes. Long chain acyl-CoA derivatives may serve as biological indicators of the bacterial metabolic state. Functionally, regulates the expression of the Rv1217c-Rv1218c multidrug efflux system and its own expression. Acts by binding to promoter regions of Rv1219c and upstream of the Rv1218c gene. Important for survival in prolonged stationary phase and during macrophage infection. May be used to eliminate non-growing mycobacteria. The polypeptide is HTH-type transcriptional regulatory protein RaaS (Mycobacterium tuberculosis (strain ATCC 25618 / H37Rv)).